We begin with the raw amino-acid sequence, 343 residues long: Fiber protein (343 aa).

The protein belongs to the adenoviridae fiber family. As to quaternary structure, homotrimer. Interacts with host receptor CD46. Interacts (via N-terminal tail region) with pentons.

The protein localises to the virion. The protein resides in the host nucleus. In terms of biological role, forms spikes that protrude from each vertex of the icosahedral capsid. Interacts with host receptor CD46 to provide virion initial attachment to target cell. Fiber proteins are shed during virus entry, when virus is still at the cell surface. The polypeptide is Fiber protein (Homo sapiens (Human)).